Reading from the N-terminus, the 275-residue chain is Diaminopimelate epimerase (275 aa).

Asn-12, Gln-45, and Asn-65 together coordinate substrate. The active-site Proton donor is Cys-74. Substrate contacts are provided by residues 75–76 (GN), Asn-158, Asn-191, and 209–210 (ER). The active-site Proton acceptor is Cys-218. 219–220 (GT) contributes to the substrate binding site.

The protein belongs to the diaminopimelate epimerase family. In terms of assembly, homodimer.

Its subcellular location is the cytoplasm. It catalyses the reaction (2S,6S)-2,6-diaminopimelate = meso-2,6-diaminopimelate. The protein operates within amino-acid biosynthesis; L-lysine biosynthesis via DAP pathway; DL-2,6-diaminopimelate from LL-2,6-diaminopimelate: step 1/1. Functionally, catalyzes the stereoinversion of LL-2,6-diaminopimelate (L,L-DAP) to meso-diaminopimelate (meso-DAP), a precursor of L-lysine and an essential component of the bacterial peptidoglycan. In Shewanella frigidimarina (strain NCIMB 400), this protein is Diaminopimelate epimerase.